A 308-amino-acid polypeptide reads, in one-letter code: Methionyl-tRNA formyltransferase (308 aa).

Position 109-112 (109-112 (SLLP)) interacts with (6S)-5,6,7,8-tetrahydrofolate.

The protein belongs to the Fmt family.

The catalysed reaction is L-methionyl-tRNA(fMet) + (6R)-10-formyltetrahydrofolate = N-formyl-L-methionyl-tRNA(fMet) + (6S)-5,6,7,8-tetrahydrofolate + H(+). Functionally, attaches a formyl group to the free amino group of methionyl-tRNA(fMet). The formyl group appears to play a dual role in the initiator identity of N-formylmethionyl-tRNA by promoting its recognition by IF2 and preventing the misappropriation of this tRNA by the elongation apparatus. The chain is Methionyl-tRNA formyltransferase from Methylobacillus flagellatus (strain ATCC 51484 / DSM 6875 / VKM B-1610 / KT).